Consider the following 100-residue polypeptide: Urease subunit gamma (100 aa).

This sequence belongs to the urease gamma subunit family. Heterotrimer of UreA (gamma), UreB (beta) and UreC (alpha) subunits. Three heterotrimers associate to form the active enzyme.

The protein resides in the cytoplasm. The catalysed reaction is urea + 2 H2O + H(+) = hydrogencarbonate + 2 NH4(+). It functions in the pathway nitrogen metabolism; urea degradation; CO(2) and NH(3) from urea (urease route): step 1/1. The polypeptide is Urease subunit gamma (Allorhizobium ampelinum (strain ATCC BAA-846 / DSM 112012 / S4) (Agrobacterium vitis (strain S4))).